Here is a 353-residue protein sequence, read N- to C-terminus: MKLSDFDFDLPLELIAQNPISKRDESNLLIASTQQYVKTKFYNIIDYLKEGDLLVFNNSKVIKAKLSLDKNITINLNQRLKDNRRATNDDAGRLKSIDYWSAFAKPARKLKVGDEFYFDNHKIIITEKLEMGEIKIKFELANISVFEFLDKYGEMPLPLYIKRPERQKSDDERYQTVYSNIQGSVAAPTAGLHFTNDIINKLKAKGVQVAFVTLHVGAGTFMPVKTENINEHKMHTEYCSITPETAAIINKAKKEKRRIIAVGTTSLRTLESSGINGNVNSGDFETDIFITPGFKFQIVDMLLTNFHFPKSTLFMLVCAFAGFKEMHELYKYAIEEQMRFFSYGDATLLYKKV.

It belongs to the QueA family. In terms of assembly, monomer.

Its subcellular location is the cytoplasm. It carries out the reaction 7-aminomethyl-7-carbaguanosine(34) in tRNA + S-adenosyl-L-methionine = epoxyqueuosine(34) in tRNA + adenine + L-methionine + 2 H(+). It functions in the pathway tRNA modification; tRNA-queuosine biosynthesis. In terms of biological role, transfers and isomerizes the ribose moiety from AdoMet to the 7-aminomethyl group of 7-deazaguanine (preQ1-tRNA) to give epoxyqueuosine (oQ-tRNA). This Rickettsia bellii (strain OSU 85-389) protein is S-adenosylmethionine:tRNA ribosyltransferase-isomerase.